Reading from the N-terminus, the 180-residue chain is MSRIGKKPVQIPEKVEVSVKGDLISIKGPKGSLDRSLHPAVKLAIENGMVNVSVTDDQDRKTVALQGLFRSLVANMITGVSVGYEKKLLLNGIGYRAEVNGNTVVLNVGYSNPVNFELPKGISALVEKNTTLSLSGIDKEIVGETAARIRRIRPPEPYKGKGIMYSDERIIKKAGKAAAK.

It belongs to the universal ribosomal protein uL6 family. As to quaternary structure, part of the 50S ribosomal subunit.

Its function is as follows. This protein binds to the 23S rRNA, and is important in its secondary structure. It is located near the subunit interface in the base of the L7/L12 stalk, and near the tRNA binding site of the peptidyltransferase center. This chain is Large ribosomal subunit protein uL6, found in Desulforapulum autotrophicum (strain ATCC 43914 / DSM 3382 / VKM B-1955 / HRM2) (Desulfobacterium autotrophicum).